A 391-amino-acid chain; its full sequence is Chaperone protein DnaJ (391 aa).

The 66-residue stretch at aspartate 2 to glycine 67 folds into the J domain. The CR-type zinc finger occupies glycine 148 to lysine 226. Cysteine 161, cysteine 164, cysteine 178, cysteine 181, cysteine 200, cysteine 203, cysteine 214, and cysteine 217 together coordinate Zn(2+). CXXCXGXG motif repeat units lie at residues cysteine 161–glycine 168, cysteine 178–glycine 185, cysteine 200–glycine 207, and cysteine 214–glycine 221.

The protein belongs to the DnaJ family. In terms of assembly, homodimer. Zn(2+) is required as a cofactor.

It is found in the cytoplasm. Its function is as follows. Participates actively in the response to hyperosmotic and heat shock by preventing the aggregation of stress-denatured proteins and by disaggregating proteins, also in an autonomous, DnaK-independent fashion. Unfolded proteins bind initially to DnaJ; upon interaction with the DnaJ-bound protein, DnaK hydrolyzes its bound ATP, resulting in the formation of a stable complex. GrpE releases ADP from DnaK; ATP binding to DnaK triggers the release of the substrate protein, thus completing the reaction cycle. Several rounds of ATP-dependent interactions between DnaJ, DnaK and GrpE are required for fully efficient folding. Also involved, together with DnaK and GrpE, in the DNA replication of plasmids through activation of initiation proteins. This is Chaperone protein DnaJ from Chlamydia felis (strain Fe/C-56) (Chlamydophila felis).